The primary structure comprises 69 residues: MQKSKLNTTLNGLKDFLHQCRRVLMISRKPTRQEYITISKVTGLGICLLGFVGFVIHVPITYLKALIKP.

Residues 43-63 (GLGICLLGFVGFVIHVPITYL) traverse the membrane as a helical segment.

This sequence belongs to the SecE/SEC61-gamma family. In terms of assembly, component of the Sec protein translocase complex. Heterotrimer consisting of SecY (alpha), SecG (beta) and SecE (gamma) subunits. The heterotrimers can form oligomers, although 1 heterotrimer is thought to be able to translocate proteins. Interacts with the ribosome. May interact with SecDF, and other proteins may be involved.

Its subcellular location is the cell membrane. In terms of biological role, essential subunit of the Sec protein translocation channel SecYEG. Clamps together the 2 halves of SecY. May contact the channel plug during translocation. The chain is Protein translocase subunit SecE from Methanococcus maripaludis (strain DSM 14266 / JCM 13030 / NBRC 101832 / S2 / LL).